A 93-amino-acid polypeptide reads, in one-letter code: MSEANVNTKKEKGARKTRTGIVVSDKMNKTIVVELEDRKQHALYGKIMRTNKKVKAHDENETAGIGDRVLIAETRPLSKDKHFRLVEIVEKAK.

Belongs to the universal ribosomal protein uS17 family. As to quaternary structure, part of the 30S ribosomal subunit.

Functionally, one of the primary rRNA binding proteins, it binds specifically to the 5'-end of 16S ribosomal RNA. The protein is Small ribosomal subunit protein uS17 of Corynebacterium aurimucosum (strain ATCC 700975 / DSM 44827 / CIP 107346 / CN-1) (Corynebacterium nigricans).